A 331-amino-acid chain; its full sequence is Pantothenate kinase (331 aa).

109–116 (GSVAVGKS) contacts ATP.

The protein belongs to the prokaryotic pantothenate kinase family.

It localises to the cytoplasm. It carries out the reaction (R)-pantothenate + ATP = (R)-4'-phosphopantothenate + ADP + H(+). Its pathway is cofactor biosynthesis; coenzyme A biosynthesis; CoA from (R)-pantothenate: step 1/5. In Rhizobium rhizogenes (strain K84 / ATCC BAA-868) (Agrobacterium radiobacter), this protein is Pantothenate kinase.